The chain runs to 274 residues: Tropomyosin (274 aa).

The segment covering 1–35 has biased composition (basic and acidic residues); the sequence is MKLEKDNAMDRADTLEQQNKEANNRAEKSEEEVHN. The tract at residues 1–45 is disordered; the sequence is MKLEKDNAMDRADTLEQQNKEANNRAEKSEEEVHNLQKRMQQLEN. Residues 1–274 adopt a coiled-coil conformation; the sequence is MKLEKDNAMD…DQTFSELSGY (274 aa).

This sequence belongs to the tropomyosin family. As to quaternary structure, homodimer.

Functionally, tropomyosin, in association with the troponin complex, plays a central role in the calcium dependent regulation of muscle contraction. This is Tropomyosin from Metapenaeus ensis (Greasyback shrimp).